Here is a 145-residue protein sequence, read N- to C-terminus: Large ribosomal subunit protein uL15 (145 aa).

Positions 1–30 (MAHSLRKTRKLRGHVSHGHGRIGKHRKHPG) are enriched in basic residues. Residues 1–48 (MAHSLRKTRKLRGHVSHGHGRIGKHRKHPGGRGNAGGQHHHRINRDKY) are disordered.

It belongs to the universal ribosomal protein uL15 family. In terms of assembly, component of the large ribosomal subunit.

It localises to the cytoplasm. Its subcellular location is the cytosol. It is found in the rough endoplasmic reticulum. Functionally, component of the large ribosomal subunit. This is Large ribosomal subunit protein uL15 (rpl-27a) from Oscheius tipulae.